The sequence spans 228 residues: Octanoyltransferase (228 aa).

One can recognise a BPL/LPL catalytic domain in the interval 37–217; sequence AGGPDTLLLL…AVCDALDGRL (181 aa). Substrate-binding positions include 75 to 82, 147 to 149, and 160 to 162; these read RGGKITWH, AIG, and GFA. The Acyl-thioester intermediate role is filled by Cys-178.

Belongs to the LipB family.

It localises to the cytoplasm. The enzyme catalyses octanoyl-[ACP] + L-lysyl-[protein] = N(6)-octanoyl-L-lysyl-[protein] + holo-[ACP] + H(+). Its pathway is protein modification; protein lipoylation via endogenous pathway; protein N(6)-(lipoyl)lysine from octanoyl-[acyl-carrier-protein]: step 1/2. Functionally, catalyzes the transfer of endogenously produced octanoic acid from octanoyl-acyl-carrier-protein onto the lipoyl domains of lipoate-dependent enzymes. Lipoyl-ACP can also act as a substrate although octanoyl-ACP is likely to be the physiological substrate. In Mycolicibacterium smegmatis (strain ATCC 700084 / mc(2)155) (Mycobacterium smegmatis), this protein is Octanoyltransferase.